The chain runs to 406 residues: Argininosuccinate synthase (406 aa).

Residues 11-19 and A38 contribute to the ATP site; that span reads AYSGGLDTS. L-citrulline-binding residues include Y91 and S96. G121 lines the ATP pocket. Residues T123, N127, and D128 each coordinate L-aspartate. N127 serves as a coordination point for L-citrulline. L-citrulline is bound by residues R131, S182, S191, E267, and Y279.

It belongs to the argininosuccinate synthase family. Type 1 subfamily. In terms of assembly, homotetramer.

Its subcellular location is the cytoplasm. The enzyme catalyses L-citrulline + L-aspartate + ATP = 2-(N(omega)-L-arginino)succinate + AMP + diphosphate + H(+). Its pathway is amino-acid biosynthesis; L-arginine biosynthesis; L-arginine from L-ornithine and carbamoyl phosphate: step 2/3. The chain is Argininosuccinate synthase from Rhodospirillum centenum (strain ATCC 51521 / SW).